The primary structure comprises 285 residues: Bifunctional protein FolD (285 aa).

Residues 165–167 (GRS) and serine 190 each bind NADP(+).

The protein belongs to the tetrahydrofolate dehydrogenase/cyclohydrolase family. As to quaternary structure, homodimer.

It carries out the reaction (6R)-5,10-methylene-5,6,7,8-tetrahydrofolate + NADP(+) = (6R)-5,10-methenyltetrahydrofolate + NADPH. It catalyses the reaction (6R)-5,10-methenyltetrahydrofolate + H2O = (6R)-10-formyltetrahydrofolate + H(+). The protein operates within one-carbon metabolism; tetrahydrofolate interconversion. In terms of biological role, catalyzes the oxidation of 5,10-methylenetetrahydrofolate to 5,10-methenyltetrahydrofolate and then the hydrolysis of 5,10-methenyltetrahydrofolate to 10-formyltetrahydrofolate. The polypeptide is Bifunctional protein FolD (Burkholderia multivorans (strain ATCC 17616 / 249)).